Consider the following 539-residue polypeptide: CTP synthase (539 aa).

Residues 1-268 (MSFKCIFLTG…STFITEKLGL (268 aa)) are amidoligase domain. Ser-14 is a binding site for CTP. Ser-14 contributes to the UTP binding site. 15 to 20 (SLGKGL) is an ATP binding site. Tyr-55 lines the L-glutamine pocket. Residue Asp-72 coordinates ATP. Mg(2+) is bound by residues Asp-72 and Glu-142. CTP is bound by residues 149–151 (DIE), 188–193 (KTKPTQ), and Lys-224. UTP-binding positions include 188–193 (KTKPTQ) and Lys-224. A Glutamine amidotransferase type-1 domain is found at 294–533 (RIGLVGKYVQ…IQAAILYSRN (240 aa)). Gly-353 serves as a coordination point for L-glutamine. The active-site Nucleophile; for glutamine hydrolysis is the Cys-380. Residues 381–384 (LGMQ), Glu-404, and Arg-461 each bind L-glutamine. Catalysis depends on residues His-506 and Glu-508.

Belongs to the CTP synthase family. As to quaternary structure, homotetramer.

It carries out the reaction UTP + L-glutamine + ATP + H2O = CTP + L-glutamate + ADP + phosphate + 2 H(+). The enzyme catalyses L-glutamine + H2O = L-glutamate + NH4(+). It catalyses the reaction UTP + NH4(+) + ATP = CTP + ADP + phosphate + 2 H(+). It functions in the pathway pyrimidine metabolism; CTP biosynthesis via de novo pathway; CTP from UDP: step 2/2. With respect to regulation, allosterically activated by GTP, when glutamine is the substrate; GTP has no effect on the reaction when ammonia is the substrate. The allosteric effector GTP functions by stabilizing the protein conformation that binds the tetrahedral intermediate(s) formed during glutamine hydrolysis. Inhibited by the product CTP, via allosteric rather than competitive inhibition. Catalyzes the ATP-dependent amination of UTP to CTP with either L-glutamine or ammonia as the source of nitrogen. Regulates intracellular CTP levels through interactions with the four ribonucleotide triphosphates. The protein is CTP synthase of Chlamydia felis (strain Fe/C-56) (Chlamydophila felis).